An 855-amino-acid polypeptide reads, in one-letter code: Homeobox-leucine zipper protein HOX33 (855 aa).

The disordered stretch occupies residues 1-21 (MAAAAVGGRGERLSSSSPTAA). Positions 26 to 89 (DAGKYVRYTP…NRRCREKQRK (64 aa)) form a DNA-binding region, homeobox. Residues 84–126 (REKQRKEASRLQTVNRKLNAMNKLLMEENDRLQKQVSRLVYEN) adopt a coiled-coil conformation. An START domain is found at 168 to 390 (DANNPAGLLA…LRHIRQIAHE (223 aa)).

This sequence belongs to the HD-ZIP homeobox family. Class III subfamily. Expressed in seedlings, roots, stems, leaf sheaths and blades and panicles.

It is found in the nucleus. Probable transcription factor. The polypeptide is Homeobox-leucine zipper protein HOX33 (HOX33) (Oryza sativa subsp. indica (Rice)).